Consider the following 964-residue polypeptide: Glycine dehydrogenase (decarboxylating) (964 aa).

An N6-(pyridoxal phosphate)lysine modification is found at Lys-710.

It belongs to the GcvP family. As to quaternary structure, the glycine cleavage system is composed of four proteins: P, T, L and H. Requires pyridoxal 5'-phosphate as cofactor.

It carries out the reaction N(6)-[(R)-lipoyl]-L-lysyl-[glycine-cleavage complex H protein] + glycine + H(+) = N(6)-[(R)-S(8)-aminomethyldihydrolipoyl]-L-lysyl-[glycine-cleavage complex H protein] + CO2. Its function is as follows. The glycine cleavage system catalyzes the degradation of glycine. The P protein binds the alpha-amino group of glycine through its pyridoxal phosphate cofactor; CO(2) is released and the remaining methylamine moiety is then transferred to the lipoamide cofactor of the H protein. The protein is Glycine dehydrogenase (decarboxylating) of Saccharophagus degradans (strain 2-40 / ATCC 43961 / DSM 17024).